Reading from the N-terminus, the 249-residue chain is MERLLIVNADDFGLSKGQNYGIIEACRNGIVTSTTALVNGQAIDHAVQLSRDEPSLAIGMHFVLTMGKPLTAMPGLTRDGVLGKWIWQLAEEDALPLEEITQELASQYLRFIELFGRKPTHLDSHHHVHMFPQIFPIVARFAAEEGIALRADRQMVFDLPVNLRTTQGFSSAFYGEEISESLFLQVLDDSSHRGERSLEVMCHPAFIDNTIRQSAYCLPRLTELDVLTSASLKYAIAERGYRLGSYLDV.

H61 and H125 together coordinate Mg(2+).

Belongs to the YdjC deacetylase family. ChbG subfamily. Homodimer. It depends on Mg(2+) as a cofactor.

The protein localises to the cytoplasm. It carries out the reaction N,N'-diacetylchitobiose + H2O = N-acetyl-beta-D-glucosaminyl-(1-&gt;4)-D-glucosamine + acetate. The catalysed reaction is diacetylchitobiose-6'-phosphate + H2O = N'-monoacetylchitobiose-6'-phosphate + acetate. Its pathway is glycan degradation; chitin degradation. Functionally, involved in the degradation of chitin. ChbG is essential for growth on the acetylated chitooligosaccharides chitobiose and chitotriose but is dispensable for growth on cellobiose and chitosan dimer, the deacetylated form of chitobiose. Deacetylation of chitobiose-6-P and chitotriose-6-P is necessary for both the activation of the chb promoter by the regulatory protein ChbR and the hydrolysis of phosphorylated beta-glucosides by the phospho-beta-glucosidase ChbF. Catalyzes the removal of only one acetyl group from chitobiose-6-P to yield monoacetylchitobiose-6-P, the inducer of ChbR and the substrate of ChbF. This Escherichia coli O17:K52:H18 (strain UMN026 / ExPEC) protein is Chitooligosaccharide deacetylase.